The chain runs to 438 residues: tRNA(Ile)-lysidine synthase (438 aa).

Residue 19–24 (SGGIDS) participates in ATP binding.

Belongs to the tRNA(Ile)-lysidine synthase family.

Its subcellular location is the cytoplasm. The catalysed reaction is cytidine(34) in tRNA(Ile2) + L-lysine + ATP = lysidine(34) in tRNA(Ile2) + AMP + diphosphate + H(+). Ligates lysine onto the cytidine present at position 34 of the AUA codon-specific tRNA(Ile) that contains the anticodon CAU, in an ATP-dependent manner. Cytidine is converted to lysidine, thus changing the amino acid specificity of the tRNA from methionine to isoleucine. This Buchnera aphidicola subsp. Baizongia pistaciae (strain Bp) protein is tRNA(Ile)-lysidine synthase.